The chain runs to 416 residues: Putative pseudouridine transporter (416 aa).

At 1–2 (MD) the chain is on the periplasmic side. Residues 3 to 23 (IMRSVVGMVVLLAIAFLLSVN) form a helical membrane-spanning segment. Topologically, residues 24–31 (KKSISLRT) are cytoplasmic. A helical transmembrane segment spans residues 32–52 (VGAALLLQIAIGGIMLYFPPG). Residues 53–104 (KWAVEQAALGVHKVMSYSDAGSAFIFGSLVGPKMDVLFDGAGFIFAFRVLPA) lie on the Periplasmic side of the membrane. Residues 105–125 (IIFVTALISLLYYIGVMGLLI) traverse the membrane as a helical segment. Residues 126-172 (RILGSIFQKALNISKIESFVAVTTIFLGQNEIPAIVKPFIDRMNRNE) lie on the Cytoplasmic side of the membrane. Residues 173 to 193 (LFTAICSGMASIAGSMMIGYA) form a helical membrane-spanning segment. At 194 to 196 (GMG) the chain is on the periplasmic side. A helical membrane pass occupies residues 197–217 (VPIDYLLAASLMAIPGGILFA). Topologically, residues 218–268 (RILSPATEPSQVTFENLSFSETPPKSFIEAAASGAMTGLKIAAGVATVVMA) are cytoplasmic. The helical transmembrane segment at 269–289 (FVAIIALINGIIGGIGGWFGF) threads the bilayer. The Periplasmic segment spans residues 290–352 (ANASLESIFG…QTGGTLEVKT (63 aa)). The chain crosses the membrane as a helical span at residues 353-373 (IAIISFALCGFANFGSIGVVV). The Cytoplasmic portion of the chain corresponds to 374-394 (GAFSAISPKRAPEIAQLGLRA). Residues 395 to 415 (LAAATLSNLMSATIAGFFIGL) traverse the membrane as a helical segment. Residue A416 is a topological domain, periplasmic.

Belongs to the concentrative nucleoside transporter (CNT) (TC 2.A.41) family.

It localises to the cell inner membrane. In terms of biological role, could be involved in pseudouridine transport. This Escherichia coli (strain K12) protein is Putative pseudouridine transporter (psuT).